A 320-amino-acid chain; its full sequence is Malate dehydrogenase (320 aa).

Residues Gly10–Gly15 and Asp34 contribute to the NAD(+) site. Residues Arg83 and Arg89 each coordinate substrate. Residues Asn96 and Ile119–Asn121 contribute to the NAD(+) site. Substrate contacts are provided by Asn121 and Arg152. His176 acts as the Proton acceptor in catalysis.

This sequence belongs to the LDH/MDH superfamily. MDH type 3 family.

It catalyses the reaction (S)-malate + NAD(+) = oxaloacetate + NADH + H(+). Its function is as follows. Catalyzes the reversible oxidation of malate to oxaloacetate. The polypeptide is Malate dehydrogenase (Rhizobium etli (strain CIAT 652)).